Here is a 159-residue protein sequence, read N- to C-terminus: Transcription antitermination protein NusB (159 aa).

It belongs to the NusB family.

In terms of biological role, involved in transcription antitermination. Required for transcription of ribosomal RNA (rRNA) genes. Binds specifically to the boxA antiterminator sequence of the ribosomal RNA (rrn) operons. The protein is Transcription antitermination protein NusB of Stenotrophomonas maltophilia (strain K279a).